The sequence spans 3993 residues: MLESYVTPILMSYVNRYIKNLKPSDLQLSLWGGDVVLSKLELKLDVLEQELKLPFTFLSGHIHELRIHVPWTKLGSEPVVITINTMECILKLKDGIQDDHESCGSNSTNRSTAENTKSSIKPRRIQQAAPADPDLPPGYVQSLIRRVVNNVNIVINNLILKYVEDDIVLSVNITSAECYTVGELWDRAFMDISATDLVLRKAINFSDCTVCLDKRNASGKIEFYQDPLLYKCSFRTRLHFTYDNLNSKMPSVIKIHTLVESLKLSITDQQLPMFIRIMQLGIALYYGEIGNFKDGETEDPPCLSKDTLANLTGTEEESRIDMQYPAPYKGQELYSQDYEEPQGWVSWAWSFVPAIVSYDDGEEDDLGTDPASIMHQQKAQTLKDPIVSVGFYCTKATVTFKLTEMQAENSYYSPQKVKSKEVLCWEQEGTTIEALMMGEPFFDCQIGFVGCRAMCLKGILGVKDFEEHMNRSETEACFFICGENLSTKGLTYLTNSLFDYRSPENNGTRAEFILDAAHHKETHTDIAGIQRFGAFYMDYLYTVEHSSGKGPTSQQDFPSGKNEDLGIVQEKSTKSLVIGPLDCRLDSSAVHRVLKMIVCALEHEYEPYSRLKPESKDEKETVLDPEEVSSLEEYIPTRHTSVTLLKCTCTVFMAEFNLLDCLLPVIMGGKNSSNVTNATNFQSLRPLPSIQILVDKINLEHSVPMYAEQLVHVVSSLNQPSDNLLHYCYVHCYLKVFGFQAGLTCLDHSGSYCLPAPIIPSFSTALYGKLLKLPALWTKRSQTVVTEGIFELPNLTIQATRAQTLLLQAIYQSWSHIGNVSSSTVNEALMNEVFPMTGVKSKNPLPTLEGSIQNVELKYCSTSLVKCASGTLGSIKICAKAPGDSGKEKLIPLLQGPSDTRDLHSSKWLNESRKPESLLAPDLIAFTIQVPQYMDYCHHSGAVFLCSVQGLAVNIDPILYTWVIYQPQKRANRHAQQQPVVAVPLVTSVNRRKEDELSIGSAPLGKQQSYQASEYASSPIKTKTVTESRPVSVPVKAVLRVHEECRSPEDKMKEFIAILWNAVKSLTLQLDVQSCCVFIPNDNLPSPSTIVSGDIPGTVRSWYHGQTSIPGTLVLCLPQIKIISAGHKYMEPLQEIPFVIPRPILEEGDAFPWTISLHHFSIYTLLGKQVTLSLVEPMGCTSTLAVTSQKLLPVGPDGRHSFVVCLHVDLESLEIKCSNPQVQLIYELADTMSKVWSKIQKRGNLSPSSVYPETVAGPIPGSPVWSSVGTAPPDTSTCSPSADIGTTTEGDSVQAGDDSPFSDSVTLEQTTSNIGGSSGRVSLWMQWVLPKATVKLFAPDLEKKGTEVCMVSELEDLSASIDVQDVYTKVKCKVESFSIDHYQSRPGEGWQSGHFEGVFLQCKEKPVTTTKLLDGAHQQHGFLSLTYTKAVTKNVRHKLTSRNERRSFYKLSEGLMDGSPHFLHEILLSAQAFDIVVCFPLLNAIASVFHTKLPKTQREKRKSSGQPMRTHTLTSRNLPLIYINTSVIRIFVPQTEETQSTVAVNQAAKEDTMVLKVGSIAMAPQADNPLGRSVLRKDIYQKALNLGILRDPGSEIEDRQYQIDLQSINIGTAQWDQLKPEKGSGSGGVPTESERNSQNPALEWNMASSIQRHQERRAILTPILTDFSVRITGAPAIIFTKIISQENLHMEEILVCGHSLEVNITTNLDFFLSVAQVQLLHQLIVANMTGLEPSTKATEISKQEQKKVDTFDGGTAETSSRYSGAQDSGIGSDSVKIRIVQIEQYSGASQHRIARPSHQSSIVKNLNFIPFDIFITASRISLMTYSSVALPKFKLPEQKEDGKTGRTFLNLAEVDSDVAKPNQACVSMVTAEDPLSSSTSFSSGKKVRVLSLESLHASTRSSARQALGVTVVRQPGRRGTGDLELDLFLHLIVSQPSLLLSCHHRKQRVEVSIFDAMLKGVPSDYTCTDPGKTLPEASDYNIVWLQTVPGETDSKSGIPPSLVTLHIKDFLNGPADIYLDVSKPLKANLSFTKLDQINHFLKKIKKAHSSAHSKETSTPSDSILNMDEPPVPKCYRGKLSKTKVHCDEAQKTSFQENIWRAISCFQKVSVHTTQIVVSMETVPHPHKPCVLASLSNLNGSLTVKAAQKVPGASLGSSFLLSIHDVLLKTSLKERSRILIGPFSATVNLEAKWCKHSGNPGPQQSIPKISMDLRGGLLQVFWGQEHLNCLALLHELFNGYLQEGKSEMPVPESAPQMPSPVEKTQAFKTEQSSDDLRTGIFQYVQDAESLKLPGVYEVLFYNETEESPGMMLWRYPEPRVLTLVRITPVPFNTTEDPDISTADLGDVLQVPCGLEYWDELQKVFVAFQEFSLSESKVCELQLPDINLVHDQKKLVSSDLWRIVLNNNQNTTDDQSSASESGSQSTCEPLVTPTALAACTRVDSCFTPWFVPSLCMSFQFAHLEFRLCHHLDQLGTASPQYLQPFISDKNVPSELEYMIISFREPNLHLRQWNSGPVCQEIKFSSQMDCKLLECRNVTMQTVVKPFGICGQMALSSDGVQKLLDSTVIVDSVLVNFGQHVVHSLNTAIQAWQQNKCPEVEELVFSHFVICNDTQETLRFGQVDTDENILLASLHSHQYSWRSHKSPQLLHICIEGWGNWRWSEPFTVDHAGTFIRTIQYKGRTASLIIKVRALSGVQKQIIICGRQIICSYLSQSIELKVVQHYIGQDGQAVVREHFDCLTAKQKLPSYILENNELTELCVKAKGDEDWSRDVCLEPKASEYSTVIQVPTSNSSIIYVWCTVLTLEPNSQVQQRMIVFSPLFIMRSHLPDPIIIHLEKRSLGLSETQIIPGRGQENPLQNVEPDLVHHLTFQAREEYDPSDCAVPISTALIKQIATKIQPGGTVNEMLDEFYGPEKSQEPTWPYSNKDSDRNEQLSQWDSPMRVKLSIWKPYVRTLLIELLPWALLINQSKWDLWLFEGEKIVLQVPAGKIIIPPNFQEAFQIGIYWENTNTVHKTLAIKLVHNLTSPKWKDGGNGEVVTLDEEAFVDAEIRLGAFPGHQKLCQFCISSMVQHGIQVIQIEDKTTVINNTPYQIVYKPHLAISNSYSGKEHCHVPDSATFSICPGGEHPAVRSSSLPCWDVTPAVGSSELDTATLQKQILLGFSPVPGADSAQCWSLPAIIGGEFPRQSVAVPFGTGRENGFCTRAIALTYQEHLGVTYITLSEDPSPRVVFHNRCPVPMLMKENIRDIPKFDVYCKKIPPESSVHHELYHQIISYPDCKTKDLLPSLFLRIDSMEEMTAEWSDPVDINSQGTQVVFLTGFGYVYVDIAQQCGTVFIILAPEGKAGPIFTSTSRALERMVTFRMFITQLSLAVSDDLTHQAPSELLRLTLDNVFLHVSPVPALLPGEEPPSSFFQLYGVEVYCGDLQLDNQLYNKSNFHFAVLVCQGERTDPAQYSRVQSLLVSSKALEEYKENCFIKLCLTVSEGKDILLDVSEFTFELKPARLYVEDTFVYYIKTLFDTYLPPSRMSGHHAQLFTGQQVLPVQVTQHAKALVNAVKLRKLLIQPVNLLISIHASLKLYIASDHTPLSFSVFERGPVFTTARQLVHALAMHYAAGALFRAGWVVGSLEILGSPASLVRSIGNGISDFFRLPYEGLTRGPGAFVSGVSRGTTSFVKHISKGALTSITNLATSLARNMGRLSLDEEHYNRQEEWRRQLPESLGEGLRQGLSRLGISLLGAIAGIVDQPMQNFQKTSETQASAGHKAKGVISGVGKGIMGVFTKPIGGAAELVSQTGYGILHGAGLSQLPKQRCQPTHLYADQAPNSHVKYVWKMLQSLGRPEVHMALDVVLVRGSGQEHEGCLLLTSEVLFVVSISEDTQQQAFPITEISCAQDTKQNNLLTVQLKQPRVASDVEIDGARERLSEQQFKRLVDYIAKTSCHLAPSCSSMQTCSVVAVEPPPATVKTYHYLVDPHFAQVFISKFTMVKNKALRKGFS.

The Chorein N-terminal domain maps to 2-102 (LESYVTPILM…KDGIQDDHES (101 aa)). The tract at residues 100–133 (HESCGSNSTNRSTAENTKSSIKPRRIQQAAPADP) is disordered. Polar residues predominate over residues 103 to 119 (CGSNSTNRSTAENTKSS). Residues serine 413, serine 998, serine 1001, and serine 1032 each carry the phosphoserine modification. 3 disordered regions span residues 1262–1303 (SPVW…PFSD), 1616–1637 (DQLK…ERNS), and 1735–1770 (TKAT…DSGI). Positions 1264–1291 (VWSSVGTAPPDTSTCSPSADIGTTTEGD) are enriched in polar residues. Basic and acidic residues predominate over residues 1739–1750 (EISKQEQKKVDT). The span at 1756–1770 (AETSSRYSGAQDSGI) shows a compositional bias: polar residues. The residue at position 1789 (serine 1789) is a Phosphoserine. Residues 2048 to 2067 (HSSAHSKETSTPSDSILNMD) form a disordered region. The SHR-BD domain maps to 2604–2683 (HFVICNDTQE…TIQYKGRTAS (80 aa)). The tract at residues 3880 to 3993 (AFPITEISCA…KNKALRKGFS (114 aa)) is localizes the protein to the Golgi apparatus.

Belongs to the VPS13 family. As to quaternary structure, interacts with STX6. Interacts with STX12 (via N-terminus). Interacts with RAB6A isoform 1 (GTP-bound) and isoform 2 (GTP-bound). Interacts with RAB6B (GTP-bound). In terms of tissue distribution, ubiquitously expressed in all examined tissues.

The protein localises to the recycling endosome membrane. It is found in the cytoplasmic vesicle. It localises to the secretory vesicle. Its subcellular location is the acrosome membrane. The protein resides in the golgi apparatus. The protein localises to the cis-Golgi network membrane. It is found in the endoplasmic reticulum-Golgi intermediate compartment membrane. It localises to the trans-Golgi network membrane. Its subcellular location is the early endosome membrane. The protein resides in the lysosome membrane. Mediates the transfer of lipids between membranes at organelle contact sites. Binds phosphatidylinositol 3-phosphate. Functions as a tethering factor in the slow endocytic recycling pathway, to assist traffic between early and recycling endosomes. Involved in the transport of proacrosomal vesicles to the nuclear dense lamina (NDL) during spermatid development. Plays a role in the assembly of the Golgi apparatus, possibly by mediating trafficking to the Golgi membrane. Plays a role in the development of the nervous system, and may be required for neuron projection development. May also play a role during adipose tissue development. Required for maintenance of the ocular lens. Required for proper organization of the Golgi. The protein is Intermembrane lipid transfer protein VPS13B of Mus musculus (Mouse).